Reading from the N-terminus, the 479-residue chain is F-box/LRR-repeat protein 16 (479 aa).

The interval 1-92 is disordered; that stretch reads MSSPGIDGDP…GPVSGPPVER (92 aa). Pro residues predominate over residues 47–60; that stretch reads CQPPPPPTLPPPSL. R92 bears the Omega-N-methylarginine mark. The region spanning 94-139 is the F-box domain; sequence PLATDEKILNGLFWYFSACEKCILAQVCKAWRRVLYQPKFWAGLTP. LRR repeat units follow at residues 321 to 342, 347 to 369, 373 to 394, 398 to 419, 423 to 444, and 446 to 470; these read NLTSLSLSGCSKVTDDGVELVA, KLRSLDLSWCPRITDMALEYVAC, RLEELVLDRCVRITDTGLSYLS, SLRSLYLRWCCQVQDFGLKHLL, NLRLLSLAGCPLLTTTGLSGLV, and LQELEELELTNCPGATPELFKYFSQ.

Interacts with SKP1 and CUL1.

Its function is as follows. Substrate-recognition component of the SCF (SKP1-CUL1-F-box protein)-type E3 ubiquitin ligase complex. In Mus musculus (Mouse), this protein is F-box/LRR-repeat protein 16 (Fbxl16).